A 293-amino-acid chain; its full sequence is Diaminopimelate epimerase (293 aa).

Substrate-binding residues include Asn-13, Gln-46, and Asn-66. Cys-75 serves as the catalytic Proton donor. Substrate-binding positions include 76–77, Asn-162, Asn-195, and 213–214; these read GN and ER. The Proton acceptor role is filled by Cys-222. 223 to 224 provides a ligand contact to substrate; the sequence is GT.

It belongs to the diaminopimelate epimerase family. In terms of assembly, homodimer.

The protein resides in the cytoplasm. It catalyses the reaction (2S,6S)-2,6-diaminopimelate = meso-2,6-diaminopimelate. It functions in the pathway amino-acid biosynthesis; L-lysine biosynthesis via DAP pathway; DL-2,6-diaminopimelate from LL-2,6-diaminopimelate: step 1/1. Catalyzes the stereoinversion of LL-2,6-diaminopimelate (L,L-DAP) to meso-diaminopimelate (meso-DAP), a precursor of L-lysine and an essential component of the bacterial peptidoglycan. The polypeptide is Diaminopimelate epimerase (Psychrobacter sp. (strain PRwf-1)).